Consider the following 152-residue polypeptide: Small ribosomal subunit protein uS8m (152 aa).

It belongs to the universal ribosomal protein uS8 family.

The protein localises to the mitochondrion. This is Small ribosomal subunit protein uS8m (RPS8) from Marchantia polymorpha (Common liverwort).